The primary structure comprises 506 residues: Cytochrome P450 4B1 (506 aa).

Glu-310 serves as a coordination point for heme. Ser-431 carries the post-translational modification Phosphoserine. Cys-448 contributes to the heme binding site.

It belongs to the cytochrome P450 family. Heme serves as cofactor.

The protein localises to the endoplasmic reticulum membrane. It localises to the microsome membrane. It catalyses the reaction an organic molecule + reduced [NADPH--hemoprotein reductase] + O2 = an alcohol + oxidized [NADPH--hemoprotein reductase] + H2O + H(+). Its function is as follows. Cytochromes P450 are a group of heme-thiolate monooxygenases. In liver microsomes, this enzyme is involved in an NADPH-dependent electron transport pathway. It oxidizes a variety of structurally unrelated compounds, including steroids, fatty acids, and xenobiotics. This chain is Cytochrome P450 4B1 (CYP4B1), found in Oryctolagus cuniculus (Rabbit).